Reading from the N-terminus, the 314-residue chain is Homoserine kinase (314 aa).

Residue 95–105 coordinates ATP; the sequence is PHSRGLGSSAA.

This sequence belongs to the GHMP kinase family. Homoserine kinase subfamily.

Its subcellular location is the cytoplasm. The catalysed reaction is L-homoserine + ATP = O-phospho-L-homoserine + ADP + H(+). It functions in the pathway amino-acid biosynthesis; L-threonine biosynthesis; L-threonine from L-aspartate: step 4/5. Catalyzes the ATP-dependent phosphorylation of L-homoserine to L-homoserine phosphate. The polypeptide is Homoserine kinase (Mycolicibacterium vanbaalenii (strain DSM 7251 / JCM 13017 / BCRC 16820 / KCTC 9966 / NRRL B-24157 / PYR-1) (Mycobacterium vanbaalenii)).